Here is an 821-residue protein sequence, read N- to C-terminus: Lysosomal beta glucosidase (821 aa).

A signal peptide spans 1–24 (MKTIKSLFLLSLLIVNLLISSTYG). Positions 25 to 69 (SSIRVSIVGGEEAEVIEKPRTFGNKRELKLEYSQIYPKKQLNQEN) are excised as a propeptide. 3 N-linked (GlcNAc...) asparagine glycosylation sites follow: asparagine 113, asparagine 146, and asparagine 266. Aspartate 363 is a catalytic residue. N-linked (GlcNAc...) asparagine glycosylation is found at asparagine 535, asparagine 555, asparagine 703, and asparagine 721.

This sequence belongs to the glycosyl hydrolase 3 family. In terms of processing, glycosylated. The polyoligosaccharides are of the high-mannose type and are highly substituted with both phosphate and sulfate moieties.

The protein resides in the lysosome. It catalyses the reaction Hydrolysis of terminal, non-reducing beta-D-glucosyl residues with release of beta-D-glucose.. The polypeptide is Lysosomal beta glucosidase (gluA) (Dictyostelium discoideum (Social amoeba)).